A 1161-amino-acid polypeptide reads, in one-letter code: Nuclear pore complex-interacting protein family member B11 (1161 aa).

Residues 63 to 87 (IIIAFPTSYKVVITLWIVYLWVSLL) traverse the membrane as a helical segment. 2 disordered regions span residues 278–580 (ADDN…DDNI) and 892–1161 (SADD…RRLS). Residues 311–321 (PLPPSAPPSAP) show a composition bias toward pro residues. 9 stretches are compositionally biased toward basic and acidic residues: residues 368 to 378 (DNIKTTAERLR), 410 to 420 (DNIKTPAEHLR), 452 to 462 (DNIKTPAERLR), 494 to 504 (DNIKTPAEHLR), 536 to 546 (DNIKTTAEHLR), 918 to 928 (DNIKTPAERLR), 960 to 970 (DNIKTPAERLR), 1002 to 1012 (DNIKTPAERLR), and 1044 to 1054 (DNIKTPAERLR).

It belongs to the NPIP family.

The protein localises to the membrane. The protein is Nuclear pore complex-interacting protein family member B11 (NPIPB11) of Homo sapiens (Human).